The primary structure comprises 357 residues: Fructose-bisphosphate aldolase (357 aa).

2 residues coordinate substrate: Arg-49 and Lys-140. Catalysis depends on Glu-183, which acts as the Proton acceptor. Lys-225 (schiff-base intermediate with dihydroxyacetone-P) is an active-site residue.

This sequence belongs to the class I fructose-bisphosphate aldolase family.

It carries out the reaction beta-D-fructose 1,6-bisphosphate = D-glyceraldehyde 3-phosphate + dihydroxyacetone phosphate. Its pathway is carbohydrate degradation; glycolysis; D-glyceraldehyde 3-phosphate and glycerone phosphate from D-glucose: step 4/4. The sequence is that of Fructose-bisphosphate aldolase (fba) from Dictyostelium discoideum (Social amoeba).